A 327-amino-acid polypeptide reads, in one-letter code: Arabinose 5-phosphate isomerase KdsD (327 aa).

Residues 41–183 (ILENNRDKSR…AIALLKAKNF (143 aa)) enclose the SIS domain. Substrate-binding positions include 74–75 (GT), His81, His87, 113–122 (GLLPMIKHLD), 147–149 (HVD), Thr221, and Glu273. His81 lines the Zn(2+) pocket. The CBS 1 domain maps to 209-268 (MRKGNEIPIVKPTDNIRKAILEISDKGVGNTLVAENNTLLGIFTDGDLRRMFEAESFNSQ). Residues 275–327 (MTKNPKSISKEEMAITALEKMEKYEITSLAVVDNGHNILGIVTMHDLIKLELR) enclose the CBS 2 domain.

Belongs to the SIS family. GutQ/KpsF subfamily. In terms of assembly, homotetramer.

The catalysed reaction is D-arabinose 5-phosphate = D-ribulose 5-phosphate. Its pathway is carbohydrate biosynthesis; 3-deoxy-D-manno-octulosonate biosynthesis; 3-deoxy-D-manno-octulosonate from D-ribulose 5-phosphate: step 1/3. It participates in bacterial outer membrane biogenesis; lipopolysaccharide biosynthesis. With respect to regulation, inhibited by hydroxamates, mimicking the putative enediol reaction intermediate. Most potent inhibition, with an IC(50) of 0.7 uM, is obtained with the 4 carbon-based hydroxamate containing acetyl moieties. Functionally, involved in the biosynthesis of 3-deoxy-D-manno-octulosonate (KDO), a unique 8-carbon sugar component of lipopolysaccharides (LPSs). Catalyzes the reversible aldol-ketol isomerization between D-ribulose 5-phosphate (Ru5P) and D-arabinose 5-phosphate (A5P). The chain is Arabinose 5-phosphate isomerase KdsD (kdsD) from Francisella tularensis subsp. tularensis (strain SCHU S4 / Schu 4).